A 90-amino-acid chain; its full sequence is Putative defensin-like protein 168 (90 aa).

The first 27 residues, 1–27 (MKYFTLFMISYIFISIFVFSHIHDVEA), serve as a signal peptide directing secretion. Intrachain disulfides connect Cys32–Cys90, Cys43–Cys66, Cys51–Cys84, and Cys64–Cys86.

The protein belongs to the DEFL family.

The protein resides in the secreted. In Arabidopsis thaliana (Mouse-ear cress), this protein is Putative defensin-like protein 168.